The chain runs to 382 residues: Beta-lactamase CMY-10 (382 aa).

The first 23 residues, 1 to 23, serve as a signal peptide directing secretion; the sequence is MQQRQSILWGAVATLMWAGLAHA. S88 functions as the Acyl-ester intermediate in the catalytic mechanism. S88 contacts AMP. GMP is bound by residues S88, Q144, Y174, T336, S338, and N363. IMP-binding residues include S88, Q144, Y174, T336, S338, and N363. Y174 contacts AMP. Position 338 (S338) interacts with AMP.

This sequence belongs to the class-C beta-lactamase family. Monomer.

The catalysed reaction is a beta-lactam + H2O = a substituted beta-amino acid. With respect to regulation, inhibited by various nucleotides in vitro, including adenosine 5'-(P-acetyl)monophosphate (acAMP), inosine-5'-monophosphate (IMP) and guanosine-5'-monophosphate (GMP); IMP and GMP exhibit strongest competitive inhibition. Inhibited by the beta-lactamase-blocking agent, avibactam. Inhibited by clavulanic acid. Weakly inhibited by citric acid. Its function is as follows. Class C beta-lactamase which confers resistance to penicillins and cephalosporins. Has benzylpenicillin-, ceftazidime-, nitrocefin- and imipenem-hydrolyzing activity. The polypeptide is Beta-lactamase CMY-10 (Klebsiella aerogenes (Enterobacter aerogenes)).